The sequence spans 67 residues: METGVVKWFNAEKGYGFITPEAGGKDLFAHFSEIQANGFKSLEENQRVSFVTAMGPKGPQATKIQIL.

The CSD domain maps to 4-64 (GVVKWFNAEK…GPKGPQATKI (61 aa)).

It localises to the cytoplasm. This chain is Cold shock-like protein CspA (cspA), found in Bordetella bronchiseptica (strain ATCC BAA-588 / NCTC 13252 / RB50) (Alcaligenes bronchisepticus).